The sequence spans 608 residues: Fatty acid amide hydrolase (608 aa).

Residues Lys206 and Ser282 each act as charge relay system in the active site. 303 to 306 (GGGS) is a substrate binding site. The active-site Acyl-ester intermediate is the Ser306.

This sequence belongs to the amidase family. In terms of assembly, forms homodimers.

It is found in the endoplasmic reticulum membrane. It localises to the cell membrane. It carries out the reaction N-(9Z,12Z-octadecadienoyl)-ethanolamine + H2O = ethanolamine + (9Z,12Z)-octadecadienoate. The catalysed reaction is N-hexadecanoylethanolamine + H2O = ethanolamine + hexadecanoate. The enzyme catalyses N-dodecanoylethanolamine + H2O = dodecanoate + ethanolamine. Inhibited by methyl arachidonyl fluorophosphonate (MAFP). Catalyzes the hydrolysis of bioactive endogenous fatty acid amides to their corresponding acids. The hydrolysis of endogenous amidated lipids terminates their participation as lipid mediators in various signaling systems. Converts a wide range of N-acylethanolamines (NAEs) to their corresponding free fatty acids and ethanolamine. The polypeptide is Fatty acid amide hydrolase (Oryza sativa subsp. japonica (Rice)).